Consider the following 221-residue polypeptide: Superoxide dismutase [Mn] 1, mitochondrial (221 aa).

Residues 1–24 constitute a mitochondrion transit peptide; that stretch reads MLQNTVRCVSKLVQPITGVAAVRS. Mn(2+) contacts are provided by His50, His98, Asp182, and His186.

Belongs to the iron/manganese superoxide dismutase family. In terms of assembly, homotetramer. Requires Mn(2+) as cofactor.

Its subcellular location is the mitochondrion matrix. The catalysed reaction is 2 superoxide + 2 H(+) = H2O2 + O2. In terms of biological role, destroys superoxide anion radicals which are normally produced within the cells and which are toxic to biological systems. The polypeptide is Superoxide dismutase [Mn] 1, mitochondrial (sod-2) (Caenorhabditis elegans).